Reading from the N-terminus, the 409-residue chain is Immunity-related GTPase family M protein 1 (409 aa).

In terms of domain architecture, IRG-type G spans 75 to 251; it reads IPVSIFVTGD…PKLRDTLHKD (177 aa). GTP is bound by residues 84–91, 109–113, and 191–193; these read DSGNGMSS, TGVVR, and KLD. Ser-202 carries the phosphoserine modification. Position 232–234 (232–234) interacts with GTP; that stretch reads SSL. Lys-270 participates in a covalent cross-link: Glycyl lysine isopeptide (Lys-Gly) (interchain with G-Cter in ubiquitin). The segment at 350–374 is alpha-K amphipathic helix; it reads KLRLMTCAIVNAFFRLLRFLPCVCC.

This sequence belongs to the TRAFAC class dynamin-like GTPase superfamily. IRG family. In terms of assembly, interacts with ULK1; promoting the coassembly of ULK1 and BECN1. Interacts with BECN1; enhancing BECN1-interacting partners and influencing the composition of the BECN1 complex. Interacts with ATG16L1. Interacts with NOD2; promoting Irgm1 'Lys-63'-linked polyubiquitination, which is required for interactions with the core autophagy factors. Interacts with STX17; promoting STX17 recruitment to autophagosomes. Interacts with ATG8 proteins (GABARAP, GABARAPL1, GABARAPL2, MAP1LC3A, MAP1LC3B and MAP1LC3C); promoting STX17 recruitment to autophagosomes. Interacts with TFEB; promoting association between TFEB and PPP3CB and TFEB dephosphorylation. Interacts with PPP3CB; promoting association between TFEB and PPP3CB and TFEB dephosphorylation. Interacts with NLRP3; preventing NLRP3 inflammasome assembly and promoting SQSTM1/p62-dependent autophagic degradation of NLRP3. Interacts with CGAS; promoting SQSTM1/p62-dependent autophagic degradation of CGAS. Interacts with RIGI/RIG-I; promoting SQSTM1/p62-dependent autophagic degradation of RIGI/RIG-I. Interacts with NOD1; promoting SQSTM1/p62-dependent autophagic degradation of RIGI/RIG-I. Interacts with NOD2; promoting SQSTM1/p62-dependent autophagic degradation of RIGI/RIG-I. Interacts with RIPK2; promoting SQSTM1/p62-dependent autophagic degradation of RIGI/RIG-I. Interacts with PIK3CA. Post-translationally, palmitoylated on C-terminal Cys residues. Palmitoylation, together with the alpha-K amphipathic helix, which binds phosphatidylinositol, mediate binding to membranes. In terms of processing, ubiquitinated via 'Lys-63'-linked polyubiquitination in a NOD2-dependent process. 'Lys-63'-linked polyubiquitination is required for interactions with the core autophagy factors. Ubiquitination at Lys-270 by the DCX(WDR77) complex, also named CLR4(WDR77) complex, in intestinal cells, leading to its degradation by the proteasome. As to expression, expressed in lung and primary macrophages.

The protein localises to the golgi apparatus membrane. It localises to the cell membrane. The protein resides in the cytoplasmic vesicle. Its subcellular location is the phagosome membrane. It is found in the autophagosome membrane. The protein localises to the lysosome membrane. It localises to the late endosome membrane. The protein resides in the mitochondrion membrane. Its subcellular location is the lipid droplet. It is found in the cell projection. The protein localises to the phagocytic cup. The catalysed reaction is GTP + H2O = GDP + phosphate + H(+). Functionally, immunity-related GTPase that plays important roles in innate immunity and inflammatory response. Acts as a dynamin-like protein that binds to intracellular membranes and promotes remodeling and trafficking of those membranes. Required for clearance of acute protozoan and bacterial infections by interacting with autophagy and lysosome regulatory proteins, thereby promoting the fusion of phagosomes with lysosomes for efficient degradation of cargo including microbes. Regulates selective autophagy, including xenophagy and mitophagy, both directly and indirectly. Directly regulates autophagy by acting as a molecular adapter that promotes the coassembly of the core autophagy machinery to mediate antimicrobial defense: Irgm1 (1) activates AMPK, which in turn phosphorylates ULK1 and BECN1 to induce autophagy, (2) promotes the coassembly of ULK1 and BECN1, enhancing BECN1-interacting partners and (3) influences the composition of the BECN1 complex, by competing with the negative regulators BCL2 and RUBCN, to trigger autophagy. Also activates autophagy by promoting recruitment of STX17 to autophagosomes. In collaboration with ATG8 proteins, regulate lysosomal biogenesis, a fundamental process for any autophagic pathway, by promoting TFEB dephosphorylation. Also modulates autophagy by assisting with autophagosome formation and preventing lysosomal deacidification. Regulates autophagy by affecting mitochondrial fusion and fission. Also involved in M1 macrophage activation for the production of proinflammatory cytokines. While activating autophagy, acts as a key negative regulator of the inflammatory and interferon responses both by (1) promoting mitophagy and (2) mediating autophagy-dependent degradation of effectors of the inflammatory response. Promotes degradation of damaged and IFNG/IFN-gamma-stressed mitochondria via mitophagy, preventing cytosolic release of ligands that activate inflammation. Negatively regulates interferon-signaling in hematopoietic stem cells, preserving hematopoietic stem cell number and function. Promotes expansion of activated CD4(+) T-cells by inhibiting IFNG/IFN-gamma signaling, thereby preventing Ifng-mediated cell death of CD4(+) T-cells. Acts as a suppressor of inflammation by promoting recruitment of inflammation effectors, such as CGAS, RIGI/RIG-I and NLRP3, to autophagosome membranes, leading to their SQSTM1/p62-dependent autophagic degradation. Also directly inhibits assembly of the NLRP3 inflammasome by preventing the association between NLRP3 and PYCARD. Acts as a negative regulator of antiviral innate immune response by suppressing the RIPK2-dependent pro-inflammatory response: mediates recruitment of RIPosomes, composed of RIPK2 and NOD1 or NOD2, to autophagosome membranes, promoting their SQSTM1/p62-dependent autophagic degradation. The protein is Immunity-related GTPase family M protein 1 of Mus musculus (Mouse).